The chain runs to 550 residues: Ribosomal protein S6 kinase beta (550 aa).

The 262-residue stretch at Phe-83 to Phe-344 folds into the Protein kinase domain. ATP contacts are provided by residues Leu-89–Val-97 and Lys-115. The Proton acceptor role is filled by Asp-210. Positions Lys-345 to Asn-415 constitute an AGC-kinase C-terminal domain. Thr-404 carries the post-translational modification Phosphothreonine. Disordered stretches follow at residues Arg-433–Ser-466 and Thr-484–Met-550. Ser-439 bears the Phosphoserine mark. Residues Thr-520–Asn-534 are compositionally biased toward low complexity.

Belongs to the protein kinase superfamily. AGC Ser/Thr protein kinase family. S6 kinase subfamily. Mg(2+) is required as a cofactor. Post-translationally, may be phosphorylated on Thr-404 by let-363/TOR.

The protein resides in the cell projection. It localises to the axon. The protein localises to the perikaryon. It carries out the reaction L-seryl-[protein] + ATP = O-phospho-L-seryl-[protein] + ADP + H(+). The catalysed reaction is L-threonyl-[protein] + ATP = O-phospho-L-threonyl-[protein] + ADP + H(+). Functionally, serine/threonine-protein kinase which regulates mRNA translation. Negatively regulates lifespan and resistance to starvation, oxidative stress, protein aggregation and P.aeruginosa-mediated infection. May regulate these processes by preventing the activation of transcription factor hif-1. Required, probably downstream of let-363/TOR, for the establishment of the proper number of germline progenitors by promoting cell cycle progression and preventing differentiation during larval development. Regulates germ cell size. In addition required for sperm production and embryo viability. Involved in axon regeneration of PLM and ALM neurons by inhibiting growth cone formation early after axotomy and later by inhibiting axon extension. Functions in axon regeneration and lifespan probably by preventing aak-2/AMPK activation. Negatively regulates autophagy. This is Ribosomal protein S6 kinase beta from Caenorhabditis elegans.